The following is a 259-amino-acid chain: Haloacid dehalogenase-like hydrolase domain-containing protein 2 (259 aa).

Positions 13 and 15 each coordinate Mg(2+). Substrate contacts are provided by residues 13-15 (DLS) and 46-47 (TN). Positions 47–71 (NTTKESKQDLLERLRKLEFDISEDE) form a coiled coil. Residue K50 is modified to N6-succinyllysine. K179 serves as a coordination point for substrate. Residue D204 participates in Mg(2+) binding.

The protein belongs to the HAD-like hydrolase superfamily. The cofactor is Mg(2+).

The polypeptide is Haloacid dehalogenase-like hydrolase domain-containing protein 2 (HDHD2) (Pongo abelii (Sumatran orangutan)).